The primary structure comprises 435 residues: Temperature-sensitive sn-2 acyl-lipid omega-3 desaturase (ferredoxin), chloroplastic (435 aa).

The N-terminal 42 residues, 1–42 (MASSVLSECGFRPLPRFYPKHTTSFASNPKPTFKFNPPLKPP), are a transit peptide targeting the chloroplast. Transmembrane regions (helical) follow at residues 111-131 (MSYV…AAYF) and 134-154 (WLLW…LFVL). A Histidine box-1 motif is present at residues 156 to 160 (HDCGH). The short motif at 192–196 (HRTHH) is the Histidine box-2 element. Helical transmembrane passes span 268-290 (VLTS…FVMG) and 297-319 (LYGI…HHHG). A Histidine box-3 motif is present at residues 359 to 363 (HVIHH).

This sequence belongs to the fatty acid desaturase type 1 family.

It localises to the plastid. The protein localises to the chloroplast membrane. It catalyses the reaction a (7Z,10Z)-hexadecadienoyl-containing glycerolipid + 2 reduced [2Fe-2S]-[ferredoxin] + O2 + 2 H(+) = a (7Z,10Z,13Z)-hexadecatrienoyl-containing glycerolipid + 2 oxidized [2Fe-2S]-[ferredoxin] + 2 H2O. The catalysed reaction is a (9Z,12Z)-octadecadienoyl-containing glycerolipid + 2 reduced [2Fe-2S]-[ferredoxin] + O2 + 2 H(+) = (9Z,12Z,15Z)-octadecatrienoyl-containing glycerolipid + 2 oxidized [2Fe-2S]-[ferredoxin] + 2 H2O. It functions in the pathway lipid metabolism; polyunsaturated fatty acid biosynthesis. Chloroplast omega-3 fatty acid desaturase introduces the third double bond in the biosynthesis of 16:3 and 18:3 fatty acids, important constituents of plant membranes. It is thought to use ferredoxin as an electron donor and to act on fatty acids esterified to galactolipids, sulfolipids and phosphatidylglycerol. This is Temperature-sensitive sn-2 acyl-lipid omega-3 desaturase (ferredoxin), chloroplastic from Arabidopsis thaliana (Mouse-ear cress).